The chain runs to 344 residues: uncharacterized protein (344 aa).

The first 19 residues, 1–19 (MRIIFYLTLLLFIFNKVKS), serve as a signal peptide directing secretion. The propeptide at 323-344 (SATRNQISIMVLILSVLLVLIL) is removed in mature form.

The protein localises to the cell membrane. This is an uncharacterized protein from Dictyostelium discoideum (Social amoeba).